The primary structure comprises 372 residues: Dual-specificity RNA methyltransferase RlmN (372 aa).

Residue Glu-92 is the Proton acceptor of the active site. Positions 98–337 (ETDRATLCVS…VILRKTRGDD (240 aa)) constitute a Radical SAM core domain. Cys-105 and Cys-342 are oxidised to a cystine. [4Fe-4S] cluster-binding residues include Cys-112, Cys-116, and Cys-119. S-adenosyl-L-methionine contacts are provided by residues 166–167 (GE), Ser-198, 220–222 (SLH), and Asn-299. The active-site S-methylcysteine intermediate is the Cys-342.

Belongs to the radical SAM superfamily. RlmN family. [4Fe-4S] cluster is required as a cofactor.

It is found in the cytoplasm. It catalyses the reaction adenosine(2503) in 23S rRNA + 2 reduced [2Fe-2S]-[ferredoxin] + 2 S-adenosyl-L-methionine = 2-methyladenosine(2503) in 23S rRNA + 5'-deoxyadenosine + L-methionine + 2 oxidized [2Fe-2S]-[ferredoxin] + S-adenosyl-L-homocysteine. The enzyme catalyses adenosine(37) in tRNA + 2 reduced [2Fe-2S]-[ferredoxin] + 2 S-adenosyl-L-methionine = 2-methyladenosine(37) in tRNA + 5'-deoxyadenosine + L-methionine + 2 oxidized [2Fe-2S]-[ferredoxin] + S-adenosyl-L-homocysteine. In terms of biological role, specifically methylates position 2 of adenine 2503 in 23S rRNA and position 2 of adenine 37 in tRNAs. m2A2503 modification seems to play a crucial role in the proofreading step occurring at the peptidyl transferase center and thus would serve to optimize ribosomal fidelity. The sequence is that of Dual-specificity RNA methyltransferase RlmN from Histophilus somni (strain 129Pt) (Haemophilus somnus).